The sequence spans 584 residues: AAA ATPase forming ring-shaped complexes (584 aa).

Residues 10-96 (AQSGTEHAEQ…LKENLDAVTH (87 aa)) are a coiled coil. Residues 40-66 (HQLQSAQRHAAGLSERRRAAEAQTQTA) form a disordered region. Residue 292–297 (GTGKTM) participates in ATP binding.

Belongs to the AAA ATPase family. Homohexamer. Assembles into a hexameric ring structure.

The protein is AAA ATPase forming ring-shaped complexes of Micrococcus luteus (strain ATCC 4698 / DSM 20030 / JCM 1464 / CCM 169 / CCUG 5858 / IAM 1056 / NBRC 3333 / NCIMB 9278 / NCTC 2665 / VKM Ac-2230) (Micrococcus lysodeikticus).